The following is a 197-amino-acid chain: MRSAAIKRKTKETDIEVSVNLDGTGVVEIATGIGFFDHMLDLLARHSRIDMTVKAVGDLHIDFHHTTEDVGIALGQAVKQALGDMAGITRYASIHMPMDETLTRVVIDVSGRPMLVFRTAFSRDKIGEFDTELVREWFNAFAMNAGITLHVETLYGENAHHIAESCFKGLARALRAALAIDPRNKGEVPSTKGQLGG.

This sequence belongs to the imidazoleglycerol-phosphate dehydratase family.

It is found in the cytoplasm. The enzyme catalyses D-erythro-1-(imidazol-4-yl)glycerol 3-phosphate = 3-(imidazol-4-yl)-2-oxopropyl phosphate + H2O. It participates in amino-acid biosynthesis; L-histidine biosynthesis; L-histidine from 5-phospho-alpha-D-ribose 1-diphosphate: step 6/9. The sequence is that of Imidazoleglycerol-phosphate dehydratase from Bradyrhizobium sp. (strain ORS 278).